A 186-amino-acid polypeptide reads, in one-letter code: Casparian strip membrane protein 1 (186 aa).

Topologically, residues 1-26 are cytoplasmic; sequence MKSSPAELISEAKSSTQNSKMKRAVS. A helical transmembrane segment spans residues 27–47; sequence VLDFILRLIAVVATLASAIAM. Topologically, residues 48 to 74 are extracellular; that stretch reads GTTDESLPFFTQFIRFRAEYDDLPTLR. A helical membrane pass occupies residues 75-95; the sequence is LFVVASAFASGYLILSLPLSI. Over 96–107 the chain is Cytoplasmic; the sequence is LHITRSSARRTR. The chain crosses the membrane as a helical span at residues 108-128; it reads VILIILDMVMLTSLTAASSAA. Residues 129–161 lie on the Extracellular side of the membrane; it reads AAIVYLAHKGNAKANWFAFCQQYDSFCERISGS. A helical membrane pass occupies residues 162–182; the sequence is LIGSFIAIPLFIMLILFSALV. Topologically, residues 183–186 are cytoplasmic; the sequence is LSKR.

This sequence belongs to the Casparian strip membrane proteins (CASP) family. As to quaternary structure, homodimer and heterodimers.

The protein resides in the cell membrane. In terms of biological role, regulates membrane-cell wall junctions and localized cell wall deposition. Required for establishment of the Casparian strip membrane domain (CSD) and the subsequent formation of Casparian strips, a cell wall modification of the root endodermis that determines an apoplastic barrier between the intraorganismal apoplasm and the extraorganismal apoplasm and prevents lateral diffusion. In Lotus japonicus (Lotus corniculatus var. japonicus), this protein is Casparian strip membrane protein 1.